A 76-amino-acid polypeptide reads, in one-letter code: Conotoxin Ca11b (76 aa).

The N-terminal stretch at 1–19 (MKLVLAIVVILMLLSLSTG) is a signal peptide. Residues 20–42 (AEMSDNHASMSANALRDRLLGPK) constitute a propeptide that is removed on maturation. 4 cysteine pairs are disulfide-bonded: Cys46/Cys60, Cys53/Cys65, Cys59/Cys69, and Cys64/Cys76.

Expressed by the venom duct.

It is found in the secreted. This Conus caracteristicus (Characteristic cone) protein is Conotoxin Ca11b.